The following is an 892-amino-acid chain: Alanine--tRNA ligase (892 aa).

H594, H598, C702, and H706 together coordinate Zn(2+).

This sequence belongs to the class-II aminoacyl-tRNA synthetase family. The cofactor is Zn(2+).

The protein resides in the cytoplasm. It carries out the reaction tRNA(Ala) + L-alanine + ATP = L-alanyl-tRNA(Ala) + AMP + diphosphate. Functionally, catalyzes the attachment of alanine to tRNA(Ala) in a two-step reaction: alanine is first activated by ATP to form Ala-AMP and then transferred to the acceptor end of tRNA(Ala). Also edits incorrectly charged Ser-tRNA(Ala) and Gly-tRNA(Ala) via its editing domain. In Pyrobaculum aerophilum (strain ATCC 51768 / DSM 7523 / JCM 9630 / CIP 104966 / NBRC 100827 / IM2), this protein is Alanine--tRNA ligase.